We begin with the raw amino-acid sequence, 634 residues long: Glutathione S-transferase C-terminal domain-containing protein (634 aa).

The 203-residue stretch at 131 to 333 (LGFKKTCLKA…QEVPKVKTAA (203 aa)) folds into the GST C-terminal domain. The interval 189–233 (RVHNDDKLRRQKLKQQKAAGSEPPSGKGKAKSKASAQKTPKDLAA) is disordered. A compositionally biased stretch (low complexity) spans 204-226 (QKAAGSEPPSGKGKAKSKASAQK).

Belongs to the GSTCD family.

The protein localises to the cytoplasm. The sequence is that of Glutathione S-transferase C-terminal domain-containing protein (Gstcd) from Mus musculus (Mouse).